The sequence spans 133 residues: Large ribosomal subunit protein eL14 (133 aa).

Belongs to the eukaryotic ribosomal protein eL14 family.

The sequence is that of Large ribosomal subunit protein eL14 from Pisum sativum (Garden pea).